We begin with the raw amino-acid sequence, 271 residues long: Phosphate import ATP-binding protein PstB (271 aa).

In terms of domain architecture, ABC transporter spans 25-266 (VDVRQLSLWY…PKHPYTEAYI (242 aa)). 57 to 64 (GPSGCGKS) contacts ATP.

The protein belongs to the ABC transporter superfamily. Phosphate importer (TC 3.A.1.7) family. In terms of assembly, the complex is composed of two ATP-binding proteins (PstB), two transmembrane proteins (PstC and PstA) and a solute-binding protein (PstS).

It localises to the cell inner membrane. The enzyme catalyses phosphate(out) + ATP + H2O = ADP + 2 phosphate(in) + H(+). Its function is as follows. Part of the ABC transporter complex PstSACB involved in phosphate import. Responsible for energy coupling to the transport system. In Thermus thermophilus (strain ATCC BAA-163 / DSM 7039 / HB27), this protein is Phosphate import ATP-binding protein PstB.